The following is a 200-amino-acid chain: Peptidyl-tRNA hydrolase (200 aa).

TRNA is bound at residue Tyr-16. Residue His-21 is the Proton acceptor of the active site. Phe-67, Asn-69, and Asn-115 together coordinate tRNA.

The protein belongs to the PTH family. In terms of assembly, monomer.

The protein localises to the cytoplasm. The catalysed reaction is an N-acyl-L-alpha-aminoacyl-tRNA + H2O = an N-acyl-L-amino acid + a tRNA + H(+). Its function is as follows. Hydrolyzes ribosome-free peptidyl-tRNAs (with 1 or more amino acids incorporated), which drop off the ribosome during protein synthesis, or as a result of ribosome stalling. In terms of biological role, catalyzes the release of premature peptidyl moieties from peptidyl-tRNA molecules trapped in stalled 50S ribosomal subunits, and thus maintains levels of free tRNAs and 50S ribosomes. The chain is Peptidyl-tRNA hydrolase from Prochlorococcus marinus (strain MIT 9312).